A 324-amino-acid polypeptide reads, in one-letter code: Phospho-N-acetylmuramoyl-pentapeptide-transferase (324 aa).

9 consecutive transmembrane segments (helical) span residues 13 to 33 (VLSALLMGFAFSMVLGPIFIP), 57 to 77 (GTPTMGGLIFFISVSVTMLII), 85 to 105 (GMIVLYSLIAFGIIGFLDDIL), 121 to 141 (MILLLLFSIALAYYGYTNIGT), 143 to 163 (IIIPFMNSKLNLGIFYIPLVV), 179 to 199 (IDGLASSVTVIVLTFFAIVGF), 201 to 221 (TGHYQVGVFSIALAGALLGFL), 238 to 260 (LALGGAIATIALILKMPLFIIIV), and 303 to 323 (VKLVTVFSIITLILCIIGFIA).

Belongs to the glycosyltransferase 4 family. MraY subfamily. Requires Mg(2+) as cofactor.

The protein resides in the cell membrane. The enzyme catalyses UDP-N-acetyl-alpha-D-muramoyl-L-alanyl-gamma-D-glutamyl-meso-2,6-diaminopimeloyl-D-alanyl-D-alanine + di-trans,octa-cis-undecaprenyl phosphate = di-trans,octa-cis-undecaprenyl diphospho-N-acetyl-alpha-D-muramoyl-L-alanyl-D-glutamyl-meso-2,6-diaminopimeloyl-D-alanyl-D-alanine + UMP. Its pathway is cell wall biogenesis; peptidoglycan biosynthesis. Its function is as follows. Catalyzes the initial step of the lipid cycle reactions in the biosynthesis of the cell wall peptidoglycan: transfers peptidoglycan precursor phospho-MurNAc-pentapeptide from UDP-MurNAc-pentapeptide onto the lipid carrier undecaprenyl phosphate, yielding undecaprenyl-pyrophosphoryl-MurNAc-pentapeptide, known as lipid I. The protein is Phospho-N-acetylmuramoyl-pentapeptide-transferase of Clostridium botulinum (strain Eklund 17B / Type B).